A 514-amino-acid polypeptide reads, in one-letter code: Protein phosphatase 1H (514 aa).

Position 7 is a phosphoserine (Ser7). A PPM-type phosphatase domain is found at 77–507 (ATGYAEVINA…DDISVYVIPL (431 aa)). Positions 109 to 135 (AVTSTPNRNSSKRRSSLPNGEGLQLKE) are disordered. A Phosphothreonine modification is found at Thr113. A phosphoserine mark is found at Ser124 and Ser211. At Arg213 the chain carries Omega-N-methylarginine. Ser221 is modified (phosphoserine). Thr224 bears the Phosphothreonine mark. The residue at position 422 (Ser422) is a Phosphoserine.

It belongs to the PP2C family.

The protein resides in the nucleus. The protein localises to the cytoplasm. The enzyme catalyses O-phospho-L-seryl-[protein] + H2O = L-seryl-[protein] + phosphate. The catalysed reaction is O-phospho-L-threonyl-[protein] + H2O = L-threonyl-[protein] + phosphate. Its function is as follows. Dephosphorylates CDKN1B at 'Thr-187', thus removing a signal for proteasomal degradation. The sequence is that of Protein phosphatase 1H (PPM1H) from Homo sapiens (Human).